Consider the following 305-residue polypeptide: Ribonuclease BN (305 aa).

H64, H66, D68, H69, H141, D212, and H270 together coordinate Zn(2+). D68 (proton acceptor) is an active-site residue.

The protein belongs to the RNase Z family. RNase BN subfamily. Homodimer. The cofactor is Zn(2+).

Its function is as follows. Zinc phosphodiesterase, which has both exoribonuclease and endoribonuclease activities. This Shigella flexneri protein is Ribonuclease BN.